A 328-amino-acid polypeptide reads, in one-letter code: Arabinose 5-phosphate isomerase KdsD (328 aa).

Residues 42-184 (CEKMFWCKGK…AVALLKARGF (143 aa)) enclose the SIS domain. Substrate is bound by residues 75 to 76 (GT), histidine 82, histidine 88, 114 to 123 (ALIPVLKRLH), 148 to 150 (KVA), threonine 222, and aspartate 275. Zn(2+) is bound at residue histidine 82. In terms of domain architecture, CBS 1 spans 210–268 (MHTGDEIPHVKKTASLRDALLEVTRKNLGMTVICDDNMMIEGIFTDGDLRRVFDMGVDV). The 52-residue stretch at 277–328 (MTPGGIRVRPGILAVEALNLMQSRHITSVMVADGDHLLGVLHMHDLLRAGVV) folds into the CBS 2 domain.

The protein belongs to the SIS family. GutQ/KpsF subfamily. Homotetramer.

The catalysed reaction is D-arabinose 5-phosphate = D-ribulose 5-phosphate. It participates in carbohydrate biosynthesis; 3-deoxy-D-manno-octulosonate biosynthesis; 3-deoxy-D-manno-octulosonate from D-ribulose 5-phosphate: step 1/3. The protein operates within bacterial outer membrane biogenesis; lipopolysaccharide biosynthesis. Functionally, involved in the biosynthesis of 3-deoxy-D-manno-octulosonate (KDO), a unique 8-carbon sugar component of lipopolysaccharides (LPSs). Catalyzes the reversible aldol-ketol isomerization between D-ribulose 5-phosphate (Ru5P) and D-arabinose 5-phosphate (A5P). The protein is Arabinose 5-phosphate isomerase KdsD (kdsD) of Shigella flexneri.